We begin with the raw amino-acid sequence, 381 residues long: Actin-binding Rho-activating protein (381 aa).

2 disordered regions span residues 39–156 and 179–207; these read ENSI…SHGS and QEEPTWRSDSVDTEDSGYGGEAEERPEQD. Positions 69–79 are enriched in polar residues; it reads PTSHQKAQSAP. Positions 97-110 are enriched in basic and acidic residues; that stretch reads KAPEVSHIKKKEVS. Residues S156 and S188 each carry the phosphoserine modification. The span at 179-188 shows a compositional bias: basic and acidic residues; it reads QEEPTWRSDS. 2 actin-binding regions span residues 199–299 and 300–381; these read EAEE…AERA and KRAE…TLLK. 2 interaction with actin regions span residues 240–285 and 352–381; these read SPVG…GDEG and MRARKHGLVDFEGEMLWQGRDDHVVITLLK.

Binds F-actin and ABLIM1, ABLIM2 and ABLIM3. Interaction with ABLIM2 and ABLIM3 enhances activity.

It localises to the cytoplasm. It is found in the myofibril. The protein localises to the sarcomere. The protein resides in the cytoskeleton. Functionally, acts as an activator of serum response factor (SRF)-dependent transcription possibly by inducing nuclear translocation of MKL1 or MKL2 and through a mechanism requiring Rho-actin signaling. The protein is Actin-binding Rho-activating protein of Homo sapiens (Human).